We begin with the raw amino-acid sequence, 202 residues long: Na(+)-translocating NADH-quinone reductase subunit E (202 aa).

A run of 6 helical transmembrane segments spans residues alanine 11–isoleucine 31, isoleucine 35–valine 55, phenylalanine 81–valine 101, glycine 114–valine 134, leucine 144–isoleucine 164, and leucine 180–isoleucine 200.

This sequence belongs to the NqrDE/RnfAE family. In terms of assembly, composed of six subunits; NqrA, NqrB, NqrC, NqrD, NqrE and NqrF.

It is found in the cell inner membrane. It carries out the reaction a ubiquinone + n Na(+)(in) + NADH + H(+) = a ubiquinol + n Na(+)(out) + NAD(+). NQR complex catalyzes the reduction of ubiquinone-1 to ubiquinol by two successive reactions, coupled with the transport of Na(+) ions from the cytoplasm to the periplasm. NqrA to NqrE are probably involved in the second step, the conversion of ubisemiquinone to ubiquinol. The chain is Na(+)-translocating NADH-quinone reductase subunit E from Marinobacter nauticus (strain ATCC 700491 / DSM 11845 / VT8) (Marinobacter aquaeolei).